A 459-amino-acid chain; its full sequence is uncharacterized protein (459 aa).

One can recognise a TRAM domain in the interval 6-64; that stretch reads KNKQEKNIIITIKRLGINGEGIGYYKKKIIFIPGALPNEVVVAKIVDRHPHYLEGELVR. The S-adenosyl-L-methionine site is built by Gln-289, Tyr-318, Glu-339, and Asp-387. Cys-414 serves as the catalytic Nucleophile.

It belongs to the class I-like SAM-binding methyltransferase superfamily. RNA M5U methyltransferase family.

This is an uncharacterized protein from Lactobacillus johnsonii (strain CNCM I-12250 / La1 / NCC 533).